A 465-amino-acid chain; its full sequence is Soluble pyridine nucleotide transhydrogenase (465 aa).

Residue 36-45 (ERYNNVGGGC) coordinates FAD.

Belongs to the class-I pyridine nucleotide-disulfide oxidoreductase family. FAD is required as a cofactor.

It is found in the cytoplasm. It catalyses the reaction NAD(+) + NADPH = NADH + NADP(+). Functionally, conversion of NADPH, generated by peripheral catabolic pathways, to NADH, which can enter the respiratory chain for energy generation. The protein is Soluble pyridine nucleotide transhydrogenase of Serratia proteamaculans (strain 568).